Consider the following 132-residue polypeptide: ATP synthase epsilon chain (132 aa).

It belongs to the ATPase epsilon chain family. F-type ATPases have 2 components, CF(1) - the catalytic core - and CF(0) - the membrane proton channel. CF(1) has five subunits: alpha(3), beta(3), gamma(1), delta(1), epsilon(1). CF(0) has three main subunits: a, b and c.

Its subcellular location is the cell membrane. Produces ATP from ADP in the presence of a proton gradient across the membrane. This chain is ATP synthase epsilon chain (atpC), found in Bacillus sp. (strain PS3).